We begin with the raw amino-acid sequence, 448 residues long: MRPWEVAVSRRPTTAPLNQRRLVGEPCITPLHLRRSPPVRHQWGQRDRPALHTSLHQDENFHHAVFSQHQQVPLDESRQYSHSGAAPRMLHTANQPPQQSSIMVDLHEQMHQGSVPISYTVTTVTTHGFPIHTGQPIPACNAQQLPACSVMFSGQLSLLCCLPPPLIQACTMQHLPVSYQAFPPLISSEHFILHPSPAVAPHQPPPHPPHPPPPHLPPINQFVPIQPQHPRMPLQRVENEVDLRGDQHPLGTFSYPPAHHPPALTPSVPLQYLPQETLHQELPYPVPYPHMLPRRITGQRYRLQQPLPPPPPPPPYYPGFLPYFLSMLPVPPTAVGPAISLDLDVDDVEMENYEALLNLAERLGEAKPRGLTKADIEQLPSYRFNLENHQSEQTLCVVCFSDFESRQLLRVLPCNHEFHAKCVDKWLKTNRTCPICRADASEVHRDVE.

The RING-type; atypical zinc-finger motif lies at 396–437 (CVVCFSDFESRQLLRVLPCNHEFHAKCVDKWLKTNRTCPICR).

The polypeptide is RING finger protein 44 (rnf44) (Danio rerio (Zebrafish)).